Reading from the N-terminus, the 497-residue chain is Methionine--tRNA ligase (497 aa).

The 'HIGH' region signature appears at 14-24 (YYVNDVPHLGH). Zn(2+) contacts are provided by cysteine 129, cysteine 132, cysteine 147, and histidine 150. Positions 295–299 (KMSKT) match the 'KMSKS' region motif. Residue lysine 298 participates in ATP binding.

Belongs to the class-I aminoacyl-tRNA synthetase family. MetG type 2A subfamily. In terms of assembly, monomer. Zn(2+) is required as a cofactor.

Its subcellular location is the cytoplasm. The enzyme catalyses tRNA(Met) + L-methionine + ATP = L-methionyl-tRNA(Met) + AMP + diphosphate. In terms of biological role, is required not only for elongation of protein synthesis but also for the initiation of all mRNA translation through initiator tRNA(fMet) aminoacylation. In Aquifex aeolicus (strain VF5), this protein is Methionine--tRNA ligase (metG).